Consider the following 113-residue polypeptide: Iron-sulfur cluster insertion protein ErpA (113 aa).

Iron-sulfur cluster-binding residues include Cys41, Cys105, and Cys107.

Belongs to the HesB/IscA family. Homodimer. Iron-sulfur cluster is required as a cofactor.

In terms of biological role, required for insertion of 4Fe-4S clusters for at least IspG. The sequence is that of Iron-sulfur cluster insertion protein ErpA from Vibrio vulnificus (strain CMCP6).